We begin with the raw amino-acid sequence, 353 residues long: UPF0283 membrane protein YcjF (353 aa).

A compositionally biased stretch (basic and acidic residues) spans Met1 to Pro19. The interval Met1–Arg35 is disordered. 3 helical membrane passes run Met70 to Thr90, Val100 to Val120, and Glu213 to Trp233.

This sequence belongs to the UPF0283 family.

The protein resides in the cell inner membrane. In Salmonella paratyphi C (strain RKS4594), this protein is UPF0283 membrane protein YcjF.